The sequence spans 257 residues: UPF0246 protein Shewana3_3143 (257 aa).

This sequence belongs to the UPF0246 family.

This is UPF0246 protein Shewana3_3143 from Shewanella sp. (strain ANA-3).